Reading from the N-terminus, the 392-residue chain is Digeranylgeranylglycerophospholipid reductase (392 aa).

Positions 15, 34, 45, 46, 48, 99, 123, 279, 291, and 292 each coordinate FAD. V370 provides a ligand contact to a 2,3-bis-O-(geranylgeranyl)-sn-glycerol 1-phospholipid.

The protein belongs to the geranylgeranyl reductase family. DGGGPL reductase subfamily. The cofactor is FAD.

The catalysed reaction is a 2,3-bis-O-phytanyl-sn-glycerol 1-phospholipid + 8 oxidized 2[4Fe-4S]-[ferredoxin] = a 2,3-bis-O-(geranylgeranyl)-sn-glycerol 1-phospholipid + 8 reduced 2[4Fe-4S]-[ferredoxin] + 16 H(+). It catalyses the reaction 2,3-bis-O-(phytanyl)-sn-glycerol 1-phosphate + 8 oxidized 2[4Fe-4S]-[ferredoxin] = 2,3-bis-O-(geranylgeranyl)-sn-glycerol 1-phosphate + 8 reduced 2[4Fe-4S]-[ferredoxin] + 16 H(+). The enzyme catalyses a 2,3-bis-O-phytanyl-sn-glycerol 1-phospholipid + 8 A = a 2,3-bis-O-(geranylgeranyl)-sn-glycerol 1-phospholipid + 8 AH2. It carries out the reaction CDP-2,3-bis-O-(geranylgeranyl)-sn-glycerol + 8 AH2 = CDP-2,3-bis-O-(phytanyl)-sn-glycerol + 8 A. The catalysed reaction is archaetidylserine + 8 AH2 = 2,3-bis-O-phytanyl-sn-glycero-3-phospho-L-serine + 8 A. It functions in the pathway membrane lipid metabolism; glycerophospholipid metabolism. Is involved in the reduction of 2,3-digeranylgeranylglycerophospholipids (unsaturated archaeols) into 2,3-diphytanylglycerophospholipids (saturated archaeols) in the biosynthesis of archaeal membrane lipids. Catalyzes the formation of archaetidic acid (2,3-di-O-phytanyl-sn-glyceryl phosphate) from 2,3-di-O-geranylgeranylglyceryl phosphate (DGGGP) via the hydrogenation of each double bond of the isoprenoid chains. Is also probably able to reduce double bonds of geranyl groups in CDP-2,3-bis-O-(geranylgeranyl)-sn-glycerol and archaetidylserine, thus acting at various stages in the biosynthesis of archaeal membrane lipids. The sequence is that of Digeranylgeranylglycerophospholipid reductase from Methanocella arvoryzae (strain DSM 22066 / NBRC 105507 / MRE50).